Consider the following 263-residue polypeptide: Outer membrane lipoprotein 3 (263 aa).

The N-terminal stretch at 1–19 (MKIMKLAGAVAIFSLFLTA) is a signal peptide. A lipid anchor (N-palmitoyl cysteine) is attached at C20. A lipid anchor (S-diacylglycerol cysteine) is attached at C20.

The protein belongs to the NlpA lipoprotein family.

Its subcellular location is the cell outer membrane. This is Outer membrane lipoprotein 3 (plpC) from Mannheimia haemolytica (Pasteurella haemolytica).